The following is a 326-amino-acid chain: DNA-directed RNA polymerase I subunit RPA43 (326 aa).

The interval 179-202 is disordered; it reads VINTDENNGNNNNEDNKDSNGGSN. Residues 182–202 are compositionally biased toward low complexity; it reads TDENNGNNNNEDNKDSNGGSN. Phosphoserine is present on residues Ser-244, Ser-251, Ser-265, Ser-269, and Ser-285. The segment covering 288-304 has biased composition (basic and acidic residues); sequence NKESHKELDLPEVKEDN. Residues 288–326 are disordered; it reads NKESHKELDLPEVKEDNGSEIVYEENTSESNDGESSDSD. Over residues 309–326 the composition is skewed to acidic residues; sequence VYEENTSESNDGESSDSD.

The protein belongs to the eukaryotic RPA43 RNA polymerase subunit family. As to quaternary structure, component of the RNA polymerase I (Pol I) complex consisting of 14 subunits: RPA135, RPA190, RPC40, RPA14, RPB5, RPO26, RPA43, RPB8, RPA12, RPB10, RPC19, RPC10, RPA49 and RPA34. The complex is composed of a horseshoe-shaped core containing ten subunits (RPA135, RPA190, RPB5, RPO26, RPB8, RPB10, RPC10, RPA12, RPC19 and RPC40) where RPA135 and RPA190 form the DNA-binding cleft. Outside of the core, RPA14 and RPA43 form the stalk that mediates interactions with transcription initiation factors and newly synthesized RNA. Interacts with RPO26/ABC23 and with the initiation factor RRN3. Contains an average of four phosphates per molecule.

It localises to the nucleus. It is found in the nucleolus. Functionally, DNA-dependent RNA polymerases catalyze the transcription of DNA into RNA using the four ribonucleoside triphosphates as substrates. Component of RNA polymerase I (Pol I) which synthesizes ribosomal RNA precursors. Besides, RNA polymerase I has intrinsic RNA cleavage activity. Through its association with RRN3 is involved in recruitment of Pol I to rDNA promoters. In vitro, the A13-A43 subcomplex binds single-stranded RNA. The polypeptide is DNA-directed RNA polymerase I subunit RPA43 (RPA43) (Saccharomyces cerevisiae (strain ATCC 204508 / S288c) (Baker's yeast)).